The primary structure comprises 318 residues: NADH-ubiquinone oxidoreductase chain 1 (318 aa).

8 helical membrane passes run 2–22 (FLINTLLLILPVLLAMAFLTL), 69–89 (LLFIIAPTLALTLALSMWLPI), 102–122 (ILFILATSSLAVYSILWSGWA), 146–166 (LAIILLCILLMNGSFTLSSLI), 171–191 (YMWILLPAWPLAMMWFISTLA), 222–242 (LFFLAEYTNIILMNALTAILF), 253–273 (EMFTVNFATKTLLLTMTFLWI), and 294–314 (LPLTLALCMWHISMPIMLSSI).

The protein belongs to the complex I subunit 1 family. Core subunit of respiratory chain NADH dehydrogenase (Complex I) which is composed of 45 different subunits.

It is found in the mitochondrion inner membrane. The enzyme catalyses a ubiquinone + NADH + 5 H(+)(in) = a ubiquinol + NAD(+) + 4 H(+)(out). Functionally, core subunit of the mitochondrial membrane respiratory chain NADH dehydrogenase (Complex I) which catalyzes electron transfer from NADH through the respiratory chain, using ubiquinone as an electron acceptor. Essential for the catalytic activity and assembly of complex I. The sequence is that of NADH-ubiquinone oxidoreductase chain 1 (MT-ND1) from Oryctolagus cuniculus (Rabbit).